The chain runs to 1505 residues: G patch domain-containing protein 8 (1505 aa).

A G-patch domain is found at 40-86 (SDNIGHRLLQKHGWKLGQGLGKSLQGRTDPIPIVVKYDVMGMGRMEM). Residues 89 to 124 (DYAEDATERRRVLEVEKEDTEELRQKYKDYVDKEKA) adopt a coiled-coil conformation. The C2H2-type zinc-finger motif lies at 136–160 (FYCELCDKQYQKHQEFDNHINSYDH). Composition is skewed to basic and acidic residues over residues 166-175 (LKDLKQREFA) and 182-206 (SRKD…RKQA). The segment at 166–244 (LKDLKQREFA…SSTNSGASAV (79 aa)) is disordered. Residues 223–233 (VDEDGGEEDKD) are compositionally biased toward acidic residues. Lysine 311 participates in a covalent cross-link: Glycyl lysine isopeptide (Lys-Gly) (interchain with G-Cter in SUMO2). Composition is skewed to basic and acidic residues over residues 322–339 (HAEE…EKSS) and 421–436 (EGDH…ENRK). Disordered stretches follow at residues 322 to 393 (HAEE…EPEY) and 419 to 537 (QMEG…FPVL). A compositionally biased stretch (polar residues) spans 437 to 449 (SSSPKPQGCSKTA). Lysine 479 carries the post-translational modification N6-acetyllysine. Lysine 573 is covalently cross-linked (Glycyl lysine isopeptide (Lys-Gly) (interchain with G-Cter in SUMO2)). Basic and acidic residues-rich tracts occupy residues 575-612 (SRNK…KSQE) and 648-665 (SETE…EPSG). The segment at 575–1304 (SRNKDAKAKG…ESTDGTEDAS (730 aa)) is disordered. The residue at position 648 (serine 648) is a Phosphoserine. Residues 666–687 (KSHRHKKKKKHKKSSKHKRKHK) show a composition bias toward basic residues. The span at 688–702 (ADTEEKSSKAESGEK) shows a compositional bias: basic and acidic residues. Over residues 703-715 (SKKRKKRKRKKNK) the composition is skewed to basic residues. Serine 733, serine 735, and serine 753 each carry phosphoserine. Basic and acidic residues predominate over residues 745–767 (AQDDSQRRSLPAEEGNSGKKDDG). Residues 794-804 (ANTKHSSRSSH) show a composition bias toward basic residues. Positions 832–849 (SEEEEEEEEEEEEEDEDS) are enriched in acidic residues. The span at 856-871 (SRSRSGHRHSSHRSSR) shows a compositional bias: basic residues. Positions 872 to 900 (RSYSSSSDASSDQSCYSRQHSYSDDSYSD) are enriched in low complexity. Phosphoserine occurs at positions 915 and 918. Over residues 923 to 932 (SKHRSKRHKY) the composition is skewed to basic residues. Serine 985, serine 1013, serine 1018, serine 1037, and serine 1039 each carry phosphoserine. A compositionally biased stretch (basic and acidic residues) spans 1017–1031 (ESPEERRSGRRDFIR). Basic and acidic residues predominate over residues 1050–1063 (GPGKKEDGRGDDSK). Position 1085 is a phosphoserine (serine 1085). Basic and acidic residues-rich tracts occupy residues 1097-1112 (LLEK…KPNV), 1163-1185 (KKCE…EEGS), and 1211-1220 (EEPKSEEATA). A Glycyl lysine isopeptide (Lys-Gly) (interchain with G-Cter in SUMO2) cross-link involves residue lysine 1109. A Phosphoserine modification is found at serine 1179.

The chain is G patch domain-containing protein 8 (Gpatch8) from Mus musculus (Mouse).